We begin with the raw amino-acid sequence, 434 residues long: Transcription elongation factor B polypeptide 3 (434 aa).

Positions 142–161 are disordered; that stretch reads KPEPVDVHEQQASSSSMSYQ. Residues 151 to 160 are compositionally biased toward polar residues; sequence QQASSSSMSY. The BC box stretch occupies residues 221-230; sequence TLVSLCQTVL. The 45-residue stretch at 237–281 folds into the F-box domain; the sequence is IDHVGIVPFDLLKPVLDHASTDQLRHILDVNPMLVEDADEMFHEM. The tract at residues 391–415 is disordered; sequence ITPRGGGVPSTSRSRSNNNNNMNNG.

As to quaternary structure, heterotrimer of an A, B and C subunit.

It localises to the nucleus. Its function is as follows. SIII, also known as elongin, is a general transcription elongation factor that increases the RNA polymerase II transcription elongation past template-encoded arresting sites. Subunit A is transcriptionally active and its transcription activity is strongly enhanced by binding to the dimeric complex of the SIII regulatory subunits B and C (elongin BC complex). The protein is Transcription elongation factor B polypeptide 3 of Caenorhabditis elegans.